The primary structure comprises 500 residues: ATP synthase subunit alpha (500 aa).

Position 169–176 (169–176) interacts with ATP; sequence GDRQTGKT.

The protein belongs to the ATPase alpha/beta chains family. As to quaternary structure, F-type ATPases have 2 components, CF(1) - the catalytic core - and CF(0) - the membrane proton channel. CF(1) has five subunits: alpha(3), beta(3), gamma(1), delta(1), epsilon(1). CF(0) has three main subunits: a(1), b(2) and c(9-12). The alpha and beta chains form an alternating ring which encloses part of the gamma chain. CF(1) is attached to CF(0) by a central stalk formed by the gamma and epsilon chains, while a peripheral stalk is formed by the delta and b chains.

The protein resides in the cell membrane. It carries out the reaction ATP + H2O + 4 H(+)(in) = ADP + phosphate + 5 H(+)(out). Its function is as follows. Produces ATP from ADP in the presence of a proton gradient across the membrane. The alpha chain is a regulatory subunit. The polypeptide is ATP synthase subunit alpha (Lactococcus lactis subsp. cremoris (strain MG1363)).